Reading from the N-terminus, the 691-residue chain is F-box/LRR-repeat protein 5 (691 aa).

The hemerythrin-like stretch occupies residues 1–159; the sequence is MAPFPEEVDV…IKKKVIAQHC (159 aa). Positions 15, 57, 58, 61, 80, 126, and 130 each coordinate Fe(3+). Residues 202-248 enclose the F-box domain; sequence STGITHLPPEVMVSIFSYLNPQELCRCSQVSTKWSQLAKTGSLWKHL. LRR repeat units lie at residues 340–364, 365–392, 393–418, 479–508, 576–607, 608–635, and 636–661; these read SSAVSSKMVRQILELCPNLEHLDLT, QTDISDSAFDSWSWLGCCQSLRHLDLSG, CEKITDVALEKISRALGILTTHESGL, VWMLDAEDLADIEDAVEWRHRNVESLCVME, TRLLREKDLIYSGSEKSDQETGRVLLFLSLSG, CYQITDHGLRVLTLGGGLPYLEHLNLSG, and CLTVTGAGLQDLVSACPSLNDEYFYY. Residues Cys-662, Cys-676, Cys-686, and Cys-687 each coordinate [2Fe-2S] cluster.

In terms of assembly, part of a SCF (SKP1-cullin-F-box) protein ligase complex. Interacts with ACO1/IRP1, IREB2/IRP2; the interaction depends on the [2Fe-2S] cluster. Interacts with DCTN1/p150-glued. It depends on [2Fe-2S] cluster as a cofactor. In terms of processing, polybiquitinated upon iron and oxygen depletion, leading to its degradation by the proteasome. Ubiquitination is regulated by the hemerythrin-like region that acts as an oxygen and iron sensor. Undergoes constitutive ubiquitin-dependent degradation at the steady state by HERC2.

The protein resides in the cytoplasm. The protein localises to the perinuclear region. It localises to the nucleus. The protein operates within protein modification; protein ubiquitination. With respect to regulation, an iron-sulfur cluster promotes IRP2 polyubiquitination and degradation in response to both iron and oxygen concentrations. In terms of biological role, component of some SCF (SKP1-cullin-F-box) protein ligase complex that plays a central role in iron homeostasis by promoting the ubiquitination and subsequent degradation of IREB2/IRP2. The C-terminal domain of FBXL5 contains a redox-sensitive [2Fe-2S] cluster that, upon oxidation, promotes binding to IRP2 to effect its oxygen-dependent degradation. Under iron deficiency conditions, the N-terminal hemerythrin-like (Hr) region, which contains a diiron metal center, cannot bind iron and undergoes conformational changes that destabilize the FBXL5 protein and cause its ubiquitination and degradation. When intracellular iron levels start rising, the Hr region is stabilized. Additional increases in iron levels facilitate the assembly and incorporation of a redox active [2Fe-2S] cluster in the C-terminal domain. Only when oxygen level is high enough to maintain the cluster in its oxidized state can FBXL5 recruit IRP2 as a substrate for polyubiquination and degradation. Promotes ubiquitination and subsequent degradation of the dynactin complex component DCTN1. Within the nucleus, promotes the ubiquitination of SNAI1; preventing its interaction with DNA and promoting its degradation. Negatively regulates DNA damage response by mediating the ubiquitin-proteasome degradation of the DNA repair protein NABP2. This chain is F-box/LRR-repeat protein 5 (FBXL5), found in Bos taurus (Bovine).